A 227-amino-acid polypeptide reads, in one-letter code: Probable septum site-determining protein MinC (227 aa).

The protein belongs to the MinC family. In terms of assembly, interacts with MinD and FtsZ.

In terms of biological role, cell division inhibitor that blocks the formation of polar Z ring septums. Rapidly oscillates between the poles of the cell to destabilize FtsZ filaments that have formed before they mature into polar Z rings. Prevents FtsZ polymerization. This Clostridioides difficile (strain 630) (Peptoclostridium difficile) protein is Probable septum site-determining protein MinC.